The following is a 347-amino-acid chain: Large ribosomal subunit protein uL10 (347 aa).

Residues Ala-310–Gly-347 form a disordered region. Residues Glu-325 to Gly-338 are compositionally biased toward acidic residues.

The protein belongs to the universal ribosomal protein uL10 family. Part of the 50S ribosomal subunit. Forms part of the ribosomal stalk which helps the ribosome interact with GTP-bound translation factors. Forms a heptameric L10(L12)2(L12)2(L12)2 complex, where L10 forms an elongated spine to which the L12 dimers bind in a sequential fashion.

Functionally, forms part of the ribosomal stalk, playing a central role in the interaction of the ribosome with GTP-bound translation factors. The sequence is that of Large ribosomal subunit protein uL10 from Methanosarcina mazei (strain ATCC BAA-159 / DSM 3647 / Goe1 / Go1 / JCM 11833 / OCM 88) (Methanosarcina frisia).